We begin with the raw amino-acid sequence, 454 residues long: Bifunctional protein GlmU (454 aa).

The segment at 1-225 (MNIVILAAGM…LWETLGVNSK (225 aa)) is pyrophosphorylase. Residues 6-9 (LAAG), lysine 20, glutamine 71, 76-77 (GT), 98-100 (YGD), glycine 135, glutamate 150, asparagine 165, and asparagine 223 each bind UDP-N-acetyl-alpha-D-glucosamine. Aspartate 100 is a binding site for Mg(2+). Asparagine 223 serves as a coordination point for Mg(2+). Positions 226–246 (VQLAEIERIHQRNIAQRLLEA) are linker. The tract at residues 247–454 (GVTLLDPARI…WQRPVKQPKK (208 aa)) is N-acetyltransferase. Residues arginine 329 and lysine 347 each coordinate UDP-N-acetyl-alpha-D-glucosamine. Residue histidine 359 is the Proton acceptor of the active site. Tyrosine 362 and asparagine 373 together coordinate UDP-N-acetyl-alpha-D-glucosamine. Acetyl-CoA is bound by residues alanine 376, 382–383 (NY), serine 401, alanine 419, and arginine 436.

It in the N-terminal section; belongs to the N-acetylglucosamine-1-phosphate uridyltransferase family. The protein in the C-terminal section; belongs to the transferase hexapeptide repeat family. In terms of assembly, homotrimer. Mg(2+) is required as a cofactor.

The protein resides in the cytoplasm. The enzyme catalyses alpha-D-glucosamine 1-phosphate + acetyl-CoA = N-acetyl-alpha-D-glucosamine 1-phosphate + CoA + H(+). It carries out the reaction N-acetyl-alpha-D-glucosamine 1-phosphate + UTP + H(+) = UDP-N-acetyl-alpha-D-glucosamine + diphosphate. It functions in the pathway nucleotide-sugar biosynthesis; UDP-N-acetyl-alpha-D-glucosamine biosynthesis; N-acetyl-alpha-D-glucosamine 1-phosphate from alpha-D-glucosamine 6-phosphate (route II): step 2/2. Its pathway is nucleotide-sugar biosynthesis; UDP-N-acetyl-alpha-D-glucosamine biosynthesis; UDP-N-acetyl-alpha-D-glucosamine from N-acetyl-alpha-D-glucosamine 1-phosphate: step 1/1. It participates in bacterial outer membrane biogenesis; LPS lipid A biosynthesis. Catalyzes the last two sequential reactions in the de novo biosynthetic pathway for UDP-N-acetylglucosamine (UDP-GlcNAc). The C-terminal domain catalyzes the transfer of acetyl group from acetyl coenzyme A to glucosamine-1-phosphate (GlcN-1-P) to produce N-acetylglucosamine-1-phosphate (GlcNAc-1-P), which is converted into UDP-GlcNAc by the transfer of uridine 5-monophosphate (from uridine 5-triphosphate), a reaction catalyzed by the N-terminal domain. This is Bifunctional protein GlmU from Cupriavidus metallidurans (strain ATCC 43123 / DSM 2839 / NBRC 102507 / CH34) (Ralstonia metallidurans).